Consider the following 109-residue polypeptide: MQQFEWIHAAWLAFAIVLEIIANVFLKFSDGFRRKWFGLLSIAAVLGAFSALSQAVKGIDLSVAYALWGGFGIAATLAAGWVLFGQRLNRKGWIGLVLLLAGMVMIKLA.

A run of 4 helical transmembrane segments spans residues W6–L26, W36–V56, A64–F84, and L88–L108.

It belongs to the drug/metabolite transporter (DMT) superfamily. Small multidrug resistance (SMR) (TC 2.A.7.1) family. MdtI subfamily. In terms of assembly, forms a complex with MdtJ.

The protein resides in the cell inner membrane. Functionally, catalyzes the excretion of spermidine. This chain is Spermidine export protein MdtI, found in Enterobacter sp. (strain 638).